The chain runs to 322 residues: Succinate/fumarate mitochondrial transporter (322 aa).

Solcar repeat units follow at residues 8-99, 111-202, and 212-303; these read SHPA…YRTL, GNTF…LKEF, and LPSW…VREH. The next 6 helical transmembrane spans lie at 11-31, 68-88, 114-134, 177-193, 219-235, and 278-295; these read AINL…CHPL, FLAL…KMAI, FVAG…PMEV, GVSL…GANF, CIGL…NAPL, and GITP…VTFT.

It belongs to the mitochondrial carrier (TC 2.A.29) family.

The protein resides in the mitochondrion inner membrane. In terms of biological role, transports cytoplasmic succinate, derived from isocitrate by the action of isocitrate lyase in the cytosol, into the mitochondrial matrix in exchange for fumarate. This Saccharomyces cerevisiae (strain ATCC 204508 / S288c) (Baker's yeast) protein is Succinate/fumarate mitochondrial transporter (SFC1).